Consider the following 75-residue polypeptide: Cruzioseptin-7 (75 aa).

The N-terminal stretch at 1-22 (MAKLKKSLFLVLFLGLVSLSIC) is a signal peptide. The propeptide occupies 23-43 (EEEKREEENEEVQEDDDQSEE). The disordered stretch occupies residues 25-44 (EKREEENEEVQEDDDQSEEK). Positions 30–41 (ENEEVQEDDDQS) are enriched in acidic residues.

In terms of tissue distribution, expressed by the skin glands.

Its subcellular location is the secreted. Has antimicrobial activity. In Cruziohyla calcarifer (Splendid leaf frog), this protein is Cruzioseptin-7.